A 252-amino-acid polypeptide reads, in one-letter code: TLC domain-containing protein 1 (252 aa).

An N-terminal signal peptide occupies residues 1-29 (MGPGWRAPSAALVGGSVALFGALRRAALA). The Extracellular portion of the chain corresponds to 30 to 47 (LPRPAAVRSRPGRVWRWR). One can recognise a TLC domain in the interval 41–235 (GRVWRWRNLL…LLRSDFFPSL (195 aa)). A helical membrane pass occupies residues 48-68 (NLLVSFAHSVLAGLWALFSLW). The Cytoplasmic segment spans residues 69–84 (QSPELLSDIQDGYSVS). Residues 85–105 (GHLLVCFSSGYFIHDSLDIIF) traverse the membrane as a helical segment. At 106-124 (NQQSRSSWEYLVHHAMAIS) the chain is on the extracellular side. Residues 125–145 (AFVSLIITGRFLVAAMLLLLV) constitute an intramembrane region (helical). Residues 146–174 (EVSNIFLTIRMLLKMSNVPSPALYEANKY) lie on the Extracellular side of the membrane. A helical transmembrane segment spans residues 175-195 (VNLVMYFAFRLAPQVYLTWYF). Topologically, residues 196–202 (VRYVEVQ) are cytoplasmic. A helical transmembrane segment spans residues 203–223 (GQGAFLMANLLLLDAMILMYF). The Extracellular segment spans residues 224–252 (SRLLRSDFFPSLRKGSVGRDVDGEKFLID).

As to quaternary structure, interacts with CACNA1C in vitro; however the relevance of the interaction in vivo is unclear.

Its subcellular location is the cell membrane. In terms of biological role, regulates the composition and fluidity of the plasma membrane. Inhibits the incorporation of membrane-fluidizing phospholipids containing omega-3 long-chain polyunsaturated fatty acids (LCPUFA) and thereby promotes membrane rigidity. Does not appear to have any effect on LCPUFA synthesis. The sequence is that of TLC domain-containing protein 1 (TLCD1) from Gallus gallus (Chicken).